The chain runs to 246 residues: UDP-N-acetyl-D-mannosaminuronic acid transferase (246 aa).

Belongs to the glycosyltransferase 26 family.

It catalyses the reaction UDP-N-acetyl-alpha-D-mannosaminouronate + N-acetyl-alpha-D-glucosaminyl-di-trans,octa-cis-undecaprenyl diphosphate = beta-D-ManNAcA-(1-&gt;4)-alpha-D-GlcNAc-di-trans,octa-cis-undecaprenyl diphosphate + UDP + H(+). Its pathway is bacterial outer membrane biogenesis; enterobacterial common antigen biosynthesis. Catalyzes the synthesis of Und-PP-GlcNAc-ManNAcA (Lipid II), the second lipid-linked intermediate involved in enterobacterial common antigen (ECA) synthesis. The protein is UDP-N-acetyl-D-mannosaminuronic acid transferase of Escherichia coli O127:H6 (strain E2348/69 / EPEC).